Here is a 62-residue protein sequence, read N- to C-terminus: Photosystem II reaction center protein Z (62 aa).

2 consecutive transmembrane segments (helical) span residues Ser-8–Ala-28 and Phe-41–Ile-61.

Belongs to the PsbZ family. In terms of assembly, PSII is composed of 1 copy each of membrane proteins PsbA, PsbB, PsbC, PsbD, PsbE, PsbF, PsbH, PsbI, PsbJ, PsbK, PsbL, PsbM, PsbT, PsbY, PsbZ, Psb30/Ycf12, at least 3 peripheral proteins of the oxygen-evolving complex and a large number of cofactors. It forms dimeric complexes.

It localises to the plastid. The protein localises to the chloroplast thylakoid membrane. Its function is as follows. May control the interaction of photosystem II (PSII) cores with the light-harvesting antenna, regulates electron flow through the 2 photosystem reaction centers. PSII is a light-driven water plastoquinone oxidoreductase, using light energy to abstract electrons from H(2)O, generating a proton gradient subsequently used for ATP formation. This chain is Photosystem II reaction center protein Z, found in Cryptomeria japonica (Japanese cedar).